The sequence spans 984 residues: Putative formate dehydrogenase SH0748 (984 aa).

Residues 3–79 form the 2Fe-2S ferredoxin-type domain; it reads EHLIVTLDGT…PMTVNTQNND (77 aa). The [2Fe-2S] cluster site is built by cysteine 37, cysteine 48, cysteine 51, and cysteine 63. One can recognise a 4Fe-4S His(Cys)3-ligated-type domain in the interval 79-119; it reads DVKASQKEALDRILEKHMLYCTVCDYNNGDCEIHNAMDAWG. Positions 95, 99, 102, 109, 147, 150, 153, 157, 190, 193, 196, 200, 264, 267, 271, and 299 each coordinate [4Fe-4S] cluster. 4Fe-4S ferredoxin-type domains follow at residues 138 to 165 and 181 to 211; these read PFYR…VNET and NDVP…VNME. The tract at residues 252 to 984 is formate dehydrogenase; the sequence is MRKERIKKTK…YVFPGNVVDK (733 aa). The 4Fe-4S Mo/W bis-MGD-type domain maps to 257 to 313; it reads IKKTKTVCTYCGVGCSFDVWTKDREVLKVQPSHDSPANKIATCVKGKFSWGHINSDQ.

This sequence in the C-terminal section; belongs to the prokaryotic molybdopterin-containing oxidoreductase family. The cofactor is [2Fe-2S] cluster. [4Fe-4S] cluster serves as cofactor. It depends on Mo-bis(molybdopterin guanine dinucleotide) as a cofactor.

It carries out the reaction formate + NAD(+) = CO2 + NADH. This chain is Putative formate dehydrogenase SH0748, found in Staphylococcus haemolyticus (strain JCSC1435).